Here is a 211-residue protein sequence, read N- to C-terminus: Uridine kinase (211 aa).

12–19 (GGSGSGKT) is an ATP binding site.

This sequence belongs to the uridine kinase family.

The protein localises to the cytoplasm. It catalyses the reaction uridine + ATP = UMP + ADP + H(+). The enzyme catalyses cytidine + ATP = CMP + ADP + H(+). Its pathway is pyrimidine metabolism; CTP biosynthesis via salvage pathway; CTP from cytidine: step 1/3. The protein operates within pyrimidine metabolism; UMP biosynthesis via salvage pathway; UMP from uridine: step 1/1. The polypeptide is Uridine kinase (Bacillus velezensis (strain DSM 23117 / BGSC 10A6 / LMG 26770 / FZB42) (Bacillus amyloliquefaciens subsp. plantarum)).